We begin with the raw amino-acid sequence, 180 residues long: Bifunctional protein PyrR (180 aa).

The PRPP-binding motif lies at 99–111 (VILVDDVLYTCRT).

The protein belongs to the purine/pyrimidine phosphoribosyltransferase family. PyrR subfamily. As to quaternary structure, homodimer and homohexamer; in equilibrium.

It carries out the reaction UMP + diphosphate = 5-phospho-alpha-D-ribose 1-diphosphate + uracil. Functionally, regulates transcriptional attenuation of the pyrimidine nucleotide (pyr) operon by binding in a uridine-dependent manner to specific sites on pyr mRNA. This disrupts an antiterminator hairpin in the RNA and favors formation of a downstream transcription terminator, leading to a reduced expression of downstream genes. Also displays a weak uracil phosphoribosyltransferase activity which is not physiologically significant. The sequence is that of Bifunctional protein PyrR from Clostridium botulinum (strain Eklund 17B / Type B).